Here is a 180-residue protein sequence, read N- to C-terminus: Probable chorismate pyruvate-lyase (180 aa).

Substrate-binding residues include Arg-76, Leu-113, and Glu-171.

Belongs to the UbiC family.

Its subcellular location is the cytoplasm. The enzyme catalyses chorismate = 4-hydroxybenzoate + pyruvate. It participates in cofactor biosynthesis; ubiquinone biosynthesis. Removes the pyruvyl group from chorismate, with concomitant aromatization of the ring, to provide 4-hydroxybenzoate (4HB) for the ubiquinone pathway. The chain is Probable chorismate pyruvate-lyase from Pseudoalteromonas translucida (strain TAC 125).